Consider the following 914-residue polypeptide: Alanine--tRNA ligase (914 aa).

Histidine 608, histidine 612, cysteine 711, and histidine 715 together coordinate Zn(2+).

Belongs to the class-II aminoacyl-tRNA synthetase family. Requires Zn(2+) as cofactor.

The protein resides in the cytoplasm. It carries out the reaction tRNA(Ala) + L-alanine + ATP = L-alanyl-tRNA(Ala) + AMP + diphosphate. Catalyzes the attachment of alanine to tRNA(Ala) in a two-step reaction: alanine is first activated by ATP to form Ala-AMP and then transferred to the acceptor end of tRNA(Ala). Also edits incorrectly charged Ser-tRNA(Ala) and Gly-tRNA(Ala) via its editing domain. The protein is Alanine--tRNA ligase of Methanoregula boonei (strain DSM 21154 / JCM 14090 / 6A8).